We begin with the raw amino-acid sequence, 213 residues long: Motile sperm domain-containing protein 1 (213 aa).

In terms of domain architecture, MSP spans 16–143 (PVFVFPTELI…KEHLTESVFF (128 aa)). Transmembrane regions (helical) follow at residues 159 to 179 (SLLTVFLGVVCIAALMLPTLG) and 191 to 211 (LSVNQKLVAAYILGLITMAIL). A Nuclear export signal motif is present at residues 205-208 (LITM).

As to expression, widely expressed. Shows highest expression in ribs, and slightly lower levels of expression in heart, kidney, muscle, thymus, calvariae and lung. Also detected at low levels in spleen and liver.

Its subcellular location is the endoplasmic reticulum membrane. It is found in the golgi apparatus membrane. Plays a role in differentiation and/or proliferation of mesenchymal stem cells. Proposed to be involved in epithelial-to-mesenchymal transition (EMT). However, another study suggests that it is not required for EMT or stem cell self-renewal and acts during later stages of differentiation. The sequence is that of Motile sperm domain-containing protein 1 (Mospd1) from Mus musculus (Mouse).